Here is a 545-residue protein sequence, read N- to C-terminus: Chaperonin GroEL (545 aa).

ATP-binding positions include 29 to 32, Lys-50, 86 to 90, Gly-415, and Asp-495; these read TLGP and DGTTT.

Belongs to the chaperonin (HSP60) family. As to quaternary structure, forms a cylinder of 14 subunits composed of two heptameric rings stacked back-to-back. Interacts with the co-chaperonin GroES.

The protein resides in the cytoplasm. It carries out the reaction ATP + H2O + a folded polypeptide = ADP + phosphate + an unfolded polypeptide.. In terms of biological role, together with its co-chaperonin GroES, plays an essential role in assisting protein folding. The GroEL-GroES system forms a nano-cage that allows encapsulation of the non-native substrate proteins and provides a physical environment optimized to promote and accelerate protein folding. The sequence is that of Chaperonin GroEL from Porphyromonas gingivalis (strain ATCC 33277 / DSM 20709 / CIP 103683 / JCM 12257 / NCTC 11834 / 2561).